We begin with the raw amino-acid sequence, 230 residues long: Endonuclease NucS (230 aa).

Belongs to the NucS endonuclease family.

It is found in the cytoplasm. In terms of biological role, cleaves both 3' and 5' ssDNA extremities of branched DNA structures. This is Endonuclease NucS from Corynebacterium efficiens (strain DSM 44549 / YS-314 / AJ 12310 / JCM 11189 / NBRC 100395).